An 897-amino-acid chain; its full sequence is Putative POM121-like protein 1-like (897 aa).

Residues 1–19 show a composition bias toward basic and acidic residues; sequence MPEQDKDPRVQENPDDQRT. Disordered stretches follow at residues 1-177, 211-252, 266-302, 315-348, 362-469, 484-522, 536-612, 642-741, 753-793, and 812-856; these read MPEQ…LPPP, IPDC…PKSQ, EVPSTAPVSGKKHRPPGPLFSSSDPLPATSYHSRDTA, ASRDAGMRRTRSAPAAATAAPPPSTLNNTSGSLL, ATAA…ASRP, DCRPSRPSHTLSSLATGASGGPPVSKAPTMDAQQDRPKS, AEVP…LPPS, AQRS…ASRP, AISD…DRPK, and STAP…APFT. The segment covering 54–65 has biased composition (polar residues); sequence LHAQSSEIRYNH. The span at 66 to 76 shows a compositional bias: low complexity; sequence TSQTSWTSSST. Composition is skewed to polar residues over residues 77–89, 103–114, and 219–228; these read KRNAISSSYSSTG, SRCQLTLSYSKT, and PSHTLSSLAT. Polar residues-rich tracts occupy residues 376–385, 417–430, 490–499, and 556–579; these read NQRSQTSRTR, SHCQLAHSSSNTVS, PSHTLSSLAT, and FSSSDPLPATSSHSRDSAQVTSLI. Residues 599–612 show a composition bias toward low complexity; that stretch reads TSAPAAAAAALPPS. 4 stretches are compositionally biased toward polar residues: residues 650-676, 689-702, 762-771, and 828-849; these read NQRSQTSRTRSCLKRNASSSSHSSTEG, SHCQLAHSSSNTVS, PSHTLSSLAT, and FSSSDPLPATSSHSGDSAQDTS. A helical membrane pass occupies residues 877–897; it reads LGLFLLVFSFFFLLTWASFSF.

The protein belongs to the POM121 family.

It is found in the membrane. This is Putative POM121-like protein 1-like from Homo sapiens (Human).